We begin with the raw amino-acid sequence, 196 residues long: ATP-dependent Clp protease proteolytic subunit (196 aa).

S101 acts as the Nucleophile in catalysis. H126 is a catalytic residue.

This sequence belongs to the peptidase S14 family. Component of the chloroplastic Clp protease core complex.

It localises to the plastid. It is found in the chloroplast stroma. It carries out the reaction Hydrolysis of proteins to small peptides in the presence of ATP and magnesium. alpha-casein is the usual test substrate. In the absence of ATP, only oligopeptides shorter than five residues are hydrolyzed (such as succinyl-Leu-Tyr-|-NHMec, and Leu-Tyr-Leu-|-Tyr-Trp, in which cleavage of the -Tyr-|-Leu- and -Tyr-|-Trp bonds also occurs).. Its function is as follows. Cleaves peptides in various proteins in a process that requires ATP hydrolysis. Has a chymotrypsin-like activity. Plays a major role in the degradation of misfolded proteins. The sequence is that of ATP-dependent Clp protease proteolytic subunit from Helianthus annuus (Common sunflower).